Reading from the N-terminus, the 178-residue chain is ATP-dependent protease subunit HslV (178 aa).

Thr2 is an active-site residue. Gly157, Cys160, and Thr163 together coordinate Na(+).

This sequence belongs to the peptidase T1B family. HslV subfamily. A double ring-shaped homohexamer of HslV is capped on each side by a ring-shaped HslU homohexamer. The assembly of the HslU/HslV complex is dependent on binding of ATP.

The protein localises to the cytoplasm. The catalysed reaction is ATP-dependent cleavage of peptide bonds with broad specificity.. Allosterically activated by HslU binding. Protease subunit of a proteasome-like degradation complex believed to be a general protein degrading machinery. The chain is ATP-dependent protease subunit HslV from Hamiltonella defensa subsp. Acyrthosiphon pisum (strain 5AT).